A 110-amino-acid chain; its full sequence is Large ribosomal subunit protein uL22 (110 aa).

The protein belongs to the universal ribosomal protein uL22 family. As to quaternary structure, part of the 50S ribosomal subunit.

Its function is as follows. This protein binds specifically to 23S rRNA; its binding is stimulated by other ribosomal proteins, e.g. L4, L17, and L20. It is important during the early stages of 50S assembly. It makes multiple contacts with different domains of the 23S rRNA in the assembled 50S subunit and ribosome. Functionally, the globular domain of the protein is located near the polypeptide exit tunnel on the outside of the subunit, while an extended beta-hairpin is found that lines the wall of the exit tunnel in the center of the 70S ribosome. This Bdellovibrio bacteriovorus (strain ATCC 15356 / DSM 50701 / NCIMB 9529 / HD100) protein is Large ribosomal subunit protein uL22.